The chain runs to 205 residues: Small ribosomal subunit protein uS4 (205 aa).

Basic residues predominate over residues 1-12; sequence MSKRVQAKHKLD. Residues 1–49 form a disordered region; sequence MSKRVQAKHKLDRRMGQNIWGRPKSPVNRREYGPGQHGQRRKGKMSDFG. Residues 94–155 form the S4 RNA-binding domain; the sequence is RRLDAVVYRS…ASRQLEIVVV (62 aa).

Belongs to the universal ribosomal protein uS4 family. Part of the 30S ribosomal subunit. Contacts protein S5. The interaction surface between S4 and S5 is involved in control of translational fidelity.

Functionally, one of the primary rRNA binding proteins, it binds directly to 16S rRNA where it nucleates assembly of the body of the 30S subunit. In terms of biological role, with S5 and S12 plays an important role in translational accuracy. The chain is Small ribosomal subunit protein uS4 from Methylorubrum extorquens (strain CM4 / NCIMB 13688) (Methylobacterium extorquens).